The primary structure comprises 119 residues: uncharacterized protein (119 aa).

The protein localises to the mitochondrion. It localises to the nucleus. This is an uncharacterized protein from Schizosaccharomyces pombe (strain 972 / ATCC 24843) (Fission yeast).